Here is a 234-residue protein sequence, read N- to C-terminus: Probable pectate lyase F (234 aa).

The first 17 residues, 1–17 (MFSRIALLPAFLPVALA), serve as a signal peptide directing secretion. Residues asparagine 168 and asparagine 194 are each glycosylated (N-linked (GlcNAc...) asparagine).

Belongs to the polysaccharide lyase 3 family. Ca(2+) serves as cofactor.

It is found in the secreted. The catalysed reaction is Eliminative cleavage of (1-&gt;4)-alpha-D-galacturonan to give oligosaccharides with 4-deoxy-alpha-D-galact-4-enuronosyl groups at their non-reducing ends.. In terms of biological role, pectinolytic enzyme consist of four classes of enzymes: pectin lyase, polygalacturonase, pectin methylesterase and rhamnogalacturonase. Among pectinolytic enzymes, pectin lyase is the most important in depolymerization of pectin, since it cleaves internal glycosidic bonds of highly methylated pectins. Favors pectate, the anion, over pectin, the methyl ester. This Aspergillus flavus (strain ATCC 200026 / FGSC A1120 / IAM 13836 / NRRL 3357 / JCM 12722 / SRRC 167) protein is Probable pectate lyase F (plyF).